The sequence spans 189 residues: uncharacterized protein (189 aa).

The segment covering 1–15 has biased composition (basic and acidic residues); sequence MDKHGVKTPLWRKEV. Positions 1 to 77 are disordered; sequence MDKHGVKTPL…SPLRQESSSQ (77 aa). Composition is skewed to acidic residues over residues 16–29 and 46–56; these read EDPEAREEDLEDDS and SATETEEDSRD. Positions 65-77 are enriched in polar residues; the sequence is VSYSPLRQESSSQ.

This is an uncharacterized protein from Mus musculus (Mouse).